Reading from the N-terminus, the 193-residue chain is dCTP deaminase (193 aa).

DCTP is bound by residues 110–115, D128, 136–138, Y171, K178, and Q182; these read RSSLAR and VLE. E138 acts as the Proton donor/acceptor in catalysis. Residues 169 to 193 form a disordered region; the sequence is RPYNRREDAKYRNQQGAVASRIDKD.

This sequence belongs to the dCTP deaminase family. Homotrimer.

The enzyme catalyses dCTP + H2O + H(+) = dUTP + NH4(+). It functions in the pathway pyrimidine metabolism; dUMP biosynthesis; dUMP from dCTP (dUTP route): step 1/2. Its function is as follows. Catalyzes the deamination of dCTP to dUTP. The sequence is that of dCTP deaminase from Escherichia coli O8 (strain IAI1).